We begin with the raw amino-acid sequence, 581 residues long: Bifunctional lycopene cyclase/phytoene synthase (581 aa).

Positions 1 to 243 are lycopene beta-cyclase; it reads MGFDYALVHL…IVFGQLAFDN (243 aa). 7 helical membrane-spanning segments follow: residues 3–23, 35–55, 65–85, 120–140, 152–172, 173–193, and 221–241; these read FDYALVHLKYTIPPAVLLTLL, KVAFLVTIAVVATIPWDSYLI, HVIIGPTLFDIPLEEVFFFVV, LKRLIGQAILLGAIAWGWFCV, ILIWAGPFLLLLWSLAYQFII, GLPFTNTLLPIVLPTLYLWIV, and IEEALFFLLTNVLIVFGQLAF. The phytoene synthase stretch occupies residues 250-581; that stretch reads AFPHLFPDPS…RVLVAWRTLN (332 aa).

The protein in the N-terminal section; belongs to the lycopene beta-cyclase family. It in the C-terminal section; belongs to the phytoene/squalene synthase family.

Its subcellular location is the membrane. The enzyme catalyses all-trans-lycopene = gamma-carotene. The catalysed reaction is gamma-carotene = all-trans-beta-carotene. It carries out the reaction 2 (2E,6E,10E)-geranylgeranyl diphosphate = 15-cis-phytoene + 2 diphosphate. The protein operates within carotenoid biosynthesis; beta-carotene biosynthesis. Its pathway is carotenoid biosynthesis; phytoene biosynthesis; all-trans-phytoene from geranylgeranyl diphosphate: step 1/1. Its function is as follows. Bifunctional enzyme that catalyzes the reactions from geranylgeranyl diphosphate to phytoene (phytoene synthase) and lycopene to beta-carotene via the intermediate gamma-carotene (lycopene cyclase). The polypeptide is Bifunctional lycopene cyclase/phytoene synthase (Leptosphaeria maculans (strain JN3 / isolate v23.1.3 / race Av1-4-5-6-7-8) (Blackleg fungus)).